A 140-amino-acid polypeptide reads, in one-letter code: Peptidyl-prolyl cis-trans isomerase FKBP2 (140 aa).

Residues 1 to 22 (MRLSWILTILSICLSALAAATG) form the signal peptide. Residues 47–135 (GDVLHMHYTG…VFEVELLKIE (89 aa)) form the PPIase FKBP-type domain. Positions 137-140 (RSEL) match the Prevents secretion from ER motif.

This sequence belongs to the FKBP-type PPIase family. FKBP2 subfamily. As to quaternary structure, interacts with ARFGEF1/BIG1 and the C-terminal of EPB41L2.

It localises to the endoplasmic reticulum membrane. It catalyses the reaction [protein]-peptidylproline (omega=180) = [protein]-peptidylproline (omega=0). Its activity is regulated as follows. Inhibited by both FK506 and rapamycin. Its function is as follows. PPIases accelerate the folding of proteins. It catalyzes the cis-trans isomerization of proline imidic peptide bonds in oligopeptides. This is Peptidyl-prolyl cis-trans isomerase FKBP2 (Fkbp2) from Mus musculus (Mouse).